Reading from the N-terminus, the 333-residue chain is DNA-directed RNA polymerase subunit alpha (333 aa).

Positions 1-233 are alpha N-terminal domain (alpha-NTD); that stretch reads MVREKIRVST…DLFIPFLHAE (233 aa). An alpha C-terminal domain (alpha-CTD) region spans residues 269 to 333; sequence IALKYIFIDQ…DILEMEKNFA (65 aa).

This sequence belongs to the RNA polymerase alpha chain family. In plastids the minimal PEP RNA polymerase catalytic core is composed of four subunits: alpha, beta, beta', and beta''. When a (nuclear-encoded) sigma factor is associated with the core the holoenzyme is formed, which can initiate transcription.

It localises to the plastid. It is found in the chloroplast. It carries out the reaction RNA(n) + a ribonucleoside 5'-triphosphate = RNA(n+1) + diphosphate. In terms of biological role, DNA-dependent RNA polymerase catalyzes the transcription of DNA into RNA using the four ribonucleoside triphosphates as substrates. This is DNA-directed RNA polymerase subunit alpha from Cucumis sativus (Cucumber).